The following is a 180-amino-acid chain: Probable chorismate pyruvate-lyase (180 aa).

Positions 76, 113, and 171 each coordinate substrate.

This sequence belongs to the UbiC family.

The protein resides in the cytoplasm. It carries out the reaction chorismate = 4-hydroxybenzoate + pyruvate. Its pathway is cofactor biosynthesis; ubiquinone biosynthesis. Its function is as follows. Removes the pyruvyl group from chorismate, with concomitant aromatization of the ring, to provide 4-hydroxybenzoate (4HB) for the ubiquinone pathway. The polypeptide is Probable chorismate pyruvate-lyase (Pseudoalteromonas translucida (strain TAC 125)).